Consider the following 428-residue polypeptide: Adenylosuccinate synthetase (428 aa).

GTP is bound by residues Gly12–Lys18 and Gly40–Ser42. The active-site Proton acceptor is Asp13. Mg(2+) is bound by residues Asp13 and Gly40. Residues Asp13 to Lys16, Asn38 to His41, Thr128, Arg142, Gln223, Thr238, and Arg302 contribute to the IMP site. Residue His41 is the Proton donor of the active site. Residue Val298 to Arg304 participates in substrate binding. GTP contacts are provided by residues Arg304, Lys330–Asp332, and Gly412–Gly414.

It belongs to the adenylosuccinate synthetase family. Homodimer. It depends on Mg(2+) as a cofactor.

The protein localises to the cytoplasm. It carries out the reaction IMP + L-aspartate + GTP = N(6)-(1,2-dicarboxyethyl)-AMP + GDP + phosphate + 2 H(+). The protein operates within purine metabolism; AMP biosynthesis via de novo pathway; AMP from IMP: step 1/2. Its function is as follows. Plays an important role in the de novo pathway of purine nucleotide biosynthesis. Catalyzes the first committed step in the biosynthesis of AMP from IMP. The sequence is that of Adenylosuccinate synthetase from Bifidobacterium longum subsp. infantis (strain ATCC 15697 / DSM 20088 / JCM 1222 / NCTC 11817 / S12).